Reading from the N-terminus, the 382-residue chain is Galactokinase (382 aa).

34-37 contributes to the substrate binding site; the sequence is EHTD. 124–130 lines the ATP pocket; it reads GAGLSSS. Mg(2+) is bound by residues S130 and E162. Residue D174 is the Proton acceptor of the active site. Y223 serves as a coordination point for substrate.

The protein belongs to the GHMP kinase family. GalK subfamily.

It localises to the cytoplasm. It catalyses the reaction alpha-D-galactose + ATP = alpha-D-galactose 1-phosphate + ADP + H(+). Its pathway is carbohydrate metabolism; galactose metabolism. In terms of biological role, catalyzes the transfer of the gamma-phosphate of ATP to D-galactose to form alpha-D-galactose-1-phosphate (Gal-1-P). The sequence is that of Galactokinase from Escherichia coli O9:H4 (strain HS).